We begin with the raw amino-acid sequence, 368 residues long: C2H2 type master regulator of conidiophore development BrlA (368 aa).

The C2H2-type 1; degenerate zinc finger occupies 268-292; that stretch reads CKCDYPGCHKAFRRNEHLKRHKQTF. The segment at 300–323 adopts a C2H2-type 2 zinc-finger fold; that stretch reads FSCEFCGKDQFNRQDNLNNHRKLH. Positions 338–368 are disordered; it reads AAVPIIEQEERSRKRRAPPKSKSADKRVDDY. Residues 359-368 show a composition bias toward basic and acidic residues; that stretch reads KSADKRVDDY.

The protein resides in the nucleus. Functionally, brlA, abaA and wetA are pivotal regulators of conidiophore development and conidium maturation. They act individually and together to regulate their own expression and that of numerous other sporulation-specific genes. BrlA, abaA and wetA act together to positively regulate the expression of the Pks1 gene cluster that mediates the biosynthesis of an anthraquinone derivative pigment that contributes to conidial pigmentation that provides protection from UV radiation, heat and cold stress. The sequence is that of C2H2 type master regulator of conidiophore development BrlA from Metarhizium robertsii (strain ARSEF 23 / ATCC MYA-3075) (Metarhizium anisopliae (strain ARSEF 23)).